Here is a 228-residue protein sequence, read N- to C-terminus: Uracil-DNA glycosylase (228 aa).

Asp64 (proton acceptor) is an active-site residue.

Belongs to the uracil-DNA glycosylase (UDG) superfamily. UNG family.

The protein localises to the cytoplasm. The enzyme catalyses Hydrolyzes single-stranded DNA or mismatched double-stranded DNA and polynucleotides, releasing free uracil.. In terms of biological role, excises uracil residues from the DNA which can arise as a result of misincorporation of dUMP residues by DNA polymerase or due to deamination of cytosine. The polypeptide is Uracil-DNA glycosylase (Yersinia pseudotuberculosis serotype IB (strain PB1/+)).